Reading from the N-terminus, the 258-residue chain is Acetylglutamate kinase (258 aa).

Substrate is bound by residues 44–45 (GG), Arg-66, and Asn-158. ATP is bound by residues 181-186 (DVSGIL) and 209-211 (IIT).

This sequence belongs to the acetylglutamate kinase family. ArgB subfamily. In terms of assembly, homodimer.

The protein resides in the cytoplasm. It catalyses the reaction N-acetyl-L-glutamate + ATP = N-acetyl-L-glutamyl 5-phosphate + ADP. It functions in the pathway amino-acid biosynthesis; L-arginine biosynthesis; N(2)-acetyl-L-ornithine from L-glutamate: step 2/4. Catalyzes the ATP-dependent phosphorylation of N-acetyl-L-glutamate. This is Acetylglutamate kinase from Shigella sonnei (strain Ss046).